A 405-amino-acid polypeptide reads, in one-letter code: Acetate kinase (405 aa).

Asn7 contributes to the Mg(2+) binding site. Lys14 is an ATP binding site. A substrate-binding site is contributed by Arg91. Catalysis depends on Asp148, which acts as the Proton donor/acceptor. Residues 208-212 and 283-285 each bind ATP; these read HLGNG and DFR. Glu384 contacts Mg(2+).

Belongs to the acetokinase family. In terms of assembly, homodimer. The cofactor is Mg(2+). Mn(2+) serves as cofactor.

It is found in the cytoplasm. It carries out the reaction acetate + ATP = acetyl phosphate + ADP. The protein operates within metabolic intermediate biosynthesis; acetyl-CoA biosynthesis; acetyl-CoA from acetate: step 1/2. In terms of biological role, catalyzes the formation of acetyl phosphate from acetate and ATP. Can also catalyze the reverse reaction. This is Acetate kinase from Dictyoglomus turgidum (strain DSM 6724 / Z-1310).